Consider the following 296-residue polypeptide: Malate--CoA ligase subunit alpha (296 aa).

CoA-binding positions include 17 to 20 (TGDK), K43, and 96 to 98 (ITD). H251 acts as the Tele-phosphohistidine intermediate in catalysis.

The protein belongs to the succinate/malate CoA ligase alpha subunit family. Heterotetramer of two alpha and two beta subunits.

The catalysed reaction is (S)-malate + ATP + CoA = (S)-malyl-CoA + ADP + phosphate. The protein operates within one-carbon metabolism; formaldehyde assimilation via serine pathway. The sequence is that of Malate--CoA ligase subunit alpha (mtkB) from Methylorubrum extorquens (strain ATCC 14718 / DSM 1338 / JCM 2805 / NCIMB 9133 / AM1) (Methylobacterium extorquens).